The chain runs to 391 residues: Putative protein PLEKHA9 (391 aa).

The polypeptide is Putative protein PLEKHA9 (PLEKHA8P1) (Homo sapiens (Human)).